Here is an 86-residue protein sequence, read N- to C-terminus: Antitoxin VapB33 (86 aa).

Antitoxin component of a type II toxin-antitoxin (TA) system. Upon expression in M.smegmatis neutralizes the effect of cognate toxin VapC33. The chain is Antitoxin VapB33 (vapB33) from Mycobacterium tuberculosis (strain ATCC 25618 / H37Rv).